We begin with the raw amino-acid sequence, 414 residues long: 2,3-diketo-5-methylthiopentyl-1-phosphate enolase (414 aa).

The active-site Proton acceptor is the K99. Substrate-binding positions include K148, 174–177 (KDDE), H265, G338, and 360–361 (GG). The Mg(2+) site is built by K174, D176, and E177. K174 is modified (N6-carboxylysine).

This sequence belongs to the RuBisCO large chain family. Type IV subfamily. As to quaternary structure, homodimer. Mg(2+) serves as cofactor.

It carries out the reaction 5-methylsulfanyl-2,3-dioxopentyl phosphate = 2-hydroxy-5-methylsulfanyl-3-oxopent-1-enyl phosphate. It functions in the pathway amino-acid biosynthesis; L-methionine biosynthesis via salvage pathway; L-methionine from S-methyl-5-thio-alpha-D-ribose 1-phosphate: step 3/6. Its function is as follows. Catalyzes the enolization of 2,3-diketo-5-methylthiopentyl-1-phosphate (DK-MTP-1-P) into 2-hydroxy-3-keto-5-methylthiopentenyl-1-phosphate (HK-MTPenyl-1-P). The polypeptide is 2,3-diketo-5-methylthiopentyl-1-phosphate enolase (Bacillus thuringiensis (strain Al Hakam)).